Consider the following 157-residue polypeptide: 6,7-dimethyl-8-ribityllumazine synthase (157 aa).

5-amino-6-(D-ribitylamino)uracil-binding positions include phenylalanine 23, 57 to 59, and 81 to 83; these read AFE and AVI. (2S)-2-hydroxy-3-oxobutyl phosphate is bound at residue 86-87; the sequence is ST. Histidine 89 (proton donor) is an active-site residue. Position 114 (phenylalanine 114) interacts with 5-amino-6-(D-ribitylamino)uracil. A (2S)-2-hydroxy-3-oxobutyl phosphate-binding site is contributed by arginine 128.

This sequence belongs to the DMRL synthase family.

The catalysed reaction is (2S)-2-hydroxy-3-oxobutyl phosphate + 5-amino-6-(D-ribitylamino)uracil = 6,7-dimethyl-8-(1-D-ribityl)lumazine + phosphate + 2 H2O + H(+). Its pathway is cofactor biosynthesis; riboflavin biosynthesis; riboflavin from 2-hydroxy-3-oxobutyl phosphate and 5-amino-6-(D-ribitylamino)uracil: step 1/2. In terms of biological role, catalyzes the formation of 6,7-dimethyl-8-ribityllumazine by condensation of 5-amino-6-(D-ribitylamino)uracil with 3,4-dihydroxy-2-butanone 4-phosphate. This is the penultimate step in the biosynthesis of riboflavin. The protein is 6,7-dimethyl-8-ribityllumazine synthase of Desulfosudis oleivorans (strain DSM 6200 / JCM 39069 / Hxd3) (Desulfococcus oleovorans).